Here is a 278-residue protein sequence, read N- to C-terminus: Diaminopimelate epimerase (278 aa).

Substrate contacts are provided by asparagine 13, glutamine 49, and asparagine 68. Catalysis depends on cysteine 77, which acts as the Proton donor. Substrate-binding positions include 78-79 (GN), asparagine 161, asparagine 194, and 212-213 (ER). Cysteine 221 acts as the Proton acceptor in catalysis. Residue 222–223 (GT) coordinates substrate.

This sequence belongs to the diaminopimelate epimerase family. As to quaternary structure, homodimer.

The protein resides in the cytoplasm. It carries out the reaction (2S,6S)-2,6-diaminopimelate = meso-2,6-diaminopimelate. It participates in amino-acid biosynthesis; L-lysine biosynthesis via DAP pathway; DL-2,6-diaminopimelate from LL-2,6-diaminopimelate: step 1/1. Catalyzes the stereoinversion of LL-2,6-diaminopimelate (L,L-DAP) to meso-diaminopimelate (meso-DAP), a precursor of L-lysine and an essential component of the bacterial peptidoglycan. This chain is Diaminopimelate epimerase, found in Nitrosomonas eutropha (strain DSM 101675 / C91 / Nm57).